The following is a 130-amino-acid chain: Small ribosomal subunit protein uS8 (130 aa).

It belongs to the universal ribosomal protein uS8 family. Part of the 30S ribosomal subunit. Contacts proteins S5 and S12.

Functionally, one of the primary rRNA binding proteins, it binds directly to 16S rRNA central domain where it helps coordinate assembly of the platform of the 30S subunit. The chain is Small ribosomal subunit protein uS8 from Histophilus somni (strain 129Pt) (Haemophilus somnus).